The chain runs to 466 residues: ATP synthase subunit beta (466 aa).

148 to 155 (GGAGVGKT) provides a ligand contact to ATP.

It belongs to the ATPase alpha/beta chains family. F-type ATPases have 2 components, CF(1) - the catalytic core - and CF(0) - the membrane proton channel. CF(1) has five subunits: alpha(3), beta(3), gamma(1), delta(1), epsilon(1). CF(0) has three main subunits: a(1), b(2) and c(9-12). The alpha and beta chains form an alternating ring which encloses part of the gamma chain. CF(1) is attached to CF(0) by a central stalk formed by the gamma and epsilon chains, while a peripheral stalk is formed by the delta and b chains.

Its subcellular location is the cell inner membrane. It carries out the reaction ATP + H2O + 4 H(+)(in) = ADP + phosphate + 5 H(+)(out). Its function is as follows. Produces ATP from ADP in the presence of a proton gradient across the membrane. The catalytic sites are hosted primarily by the beta subunits. The sequence is that of ATP synthase subunit beta from Xylella fastidiosa (strain M12).